Reading from the N-terminus, the 231-residue chain is Isoprenyl transferase (231 aa).

Aspartate 14 is an active-site residue. Position 14 (aspartate 14) interacts with Mg(2+). Substrate-binding positions include 15 to 18, tryptophan 19, arginine 27, histidine 31, and 59 to 61; these read GNGR and STE. The active-site Proton acceptor is the asparagine 62. Substrate is bound by residues tryptophan 63, arginine 65, arginine 176, and 182–184; that span reads RIS. Glutamate 195 serves as a coordination point for Mg(2+).

The protein belongs to the UPP synthase family. As to quaternary structure, homodimer. The cofactor is Mg(2+).

Its function is as follows. Catalyzes the condensation of isopentenyl diphosphate (IPP) with allylic pyrophosphates generating different type of terpenoids. This is Isoprenyl transferase from Aquifex pyrophilus.